We begin with the raw amino-acid sequence, 79 residues long: Peptide Im-5 (79 aa).

The first 23 residues, 1-23 (MKYRKQLLVLFFAYFLVVNESEA), serve as a signal peptide directing secretion. The propeptide occupies 49–79 (RALMKRDLQDRMDPYQRNLKLDRYLKQLALD).

Belongs to the non-disulfide-bridged peptide (NDBP) superfamily. Medium-length antimicrobial peptide (group 3) family. Expressed by the venom gland.

The protein resides in the secreted. The protein localises to the target cell membrane. Functionally, antimicrobial peptide that may act by disrupting the integrity of the bacterial cell membrane. Has antibacterial activity against Gram-negative bacterium E.coli NBRC 3972 (MIC=10 uM) and against Gram-positive bacteria S.aureus NBRC 13276 (MIC=2.5-5 uM) and B.subtilis NBRC 3009 (MIC=0.5-1 uM). Also shows potent activity against antibiotic-sensitive and -resistant Acinetobacter baumannii (MIC=1.8-3.6 uM). Shows cytolytic activity against human and sheep erythrocytes. Toxic to cricket A.domestica. The chain is Peptide Im-5 from Isometrus maculatus (Lesser brown scorpion).